The sequence spans 222 residues: Orotidine 5'-phosphate decarboxylase (222 aa).

Residues D11, K30, 59–68 (DFKLADIGYI), S115, 164–174 (PGMGSQGGSYG), G187, and R188 each bind substrate. Residue K61 is the Proton donor of the active site.

This sequence belongs to the OMP decarboxylase family. Type 1 subfamily. In terms of assembly, homodimer.

It catalyses the reaction orotidine 5'-phosphate + H(+) = UMP + CO2. Its pathway is pyrimidine metabolism; UMP biosynthesis via de novo pathway; UMP from orotate: step 2/2. In terms of biological role, catalyzes the decarboxylation of orotidine 5'-monophosphate (OMP) to uridine 5'-monophosphate (UMP). The chain is Orotidine 5'-phosphate decarboxylase from Saccharolobus solfataricus (strain ATCC 35092 / DSM 1617 / JCM 11322 / P2) (Sulfolobus solfataricus).